A 203-amino-acid polypeptide reads, in one-letter code: ATP-dependent Clp protease proteolytic subunit (203 aa).

Residue S107 is the Nucleophile of the active site. The active site involves H132.

Belongs to the peptidase S14 family. As to quaternary structure, fourteen ClpP subunits assemble into 2 heptameric rings which stack back to back to give a disk-like structure with a central cavity, resembling the structure of eukaryotic proteasomes.

It is found in the cytoplasm. It catalyses the reaction Hydrolysis of proteins to small peptides in the presence of ATP and magnesium. alpha-casein is the usual test substrate. In the absence of ATP, only oligopeptides shorter than five residues are hydrolyzed (such as succinyl-Leu-Tyr-|-NHMec, and Leu-Tyr-Leu-|-Tyr-Trp, in which cleavage of the -Tyr-|-Leu- and -Tyr-|-Trp bonds also occurs).. Functionally, cleaves peptides in various proteins in a process that requires ATP hydrolysis. Has a chymotrypsin-like activity. Plays a major role in the degradation of misfolded proteins. In Shewanella frigidimarina (strain NCIMB 400), this protein is ATP-dependent Clp protease proteolytic subunit.